We begin with the raw amino-acid sequence, 188 residues long: Acireductone dioxygenase (188 aa).

4 residues coordinate Fe(2+): H97, H99, E103, and H141. Ni(2+) contacts are provided by H97, H99, E103, and H141.

This sequence belongs to the acireductone dioxygenase (ARD) family. In terms of assembly, monomer. The cofactor is Fe(2+). It depends on Ni(2+) as a cofactor.

The enzyme catalyses 1,2-dihydroxy-5-(methylsulfanyl)pent-1-en-3-one + O2 = 3-(methylsulfanyl)propanoate + CO + formate + 2 H(+). It catalyses the reaction 1,2-dihydroxy-5-(methylsulfanyl)pent-1-en-3-one + O2 = 4-methylsulfanyl-2-oxobutanoate + formate + 2 H(+). The protein operates within amino-acid biosynthesis; L-methionine biosynthesis via salvage pathway; L-methionine from S-methyl-5-thio-alpha-D-ribose 1-phosphate: step 5/6. In terms of biological role, catalyzes 2 different reactions between oxygen and the acireductone 1,2-dihydroxy-3-keto-5-methylthiopentene (DHK-MTPene) depending upon the metal bound in the active site. Fe-containing acireductone dioxygenase (Fe-ARD) produces formate and 2-keto-4-methylthiobutyrate (KMTB), the alpha-ketoacid precursor of methionine in the methionine recycle pathway. Ni-containing acireductone dioxygenase (Ni-ARD) produces methylthiopropionate, carbon monoxide and formate, and does not lie on the methionine recycle pathway. The protein is Acireductone dioxygenase of Xylella fastidiosa (strain M12).